The sequence spans 1347 residues: Spermatogenesis-associated protein 31A5 (1347 aa).

Residues 23–43 (PWVLDIFLTLVFALGFFFLLL) traverse the membrane as a helical segment. 7 disordered regions span residues 55–87 (PSPS…GREC), 106–233 (GPHL…RDST), 373–397 (EQDT…GPQK), 628–657 (DESP…KEAQ), 900–955 (RGIP…REAV), 1084–1161 (VHEE…PSVS), and 1313–1335 (KAVS…SHHH). The segment covering 60–82 (GKRKCPVGRRRRPRGRMKNHSLR) has biased composition (basic residues). The segment covering 165 to 178 (LASTPSPGPMTTSV) has biased composition (polar residues). A compositionally biased stretch (pro residues) spans 198–211 (PEPPALFPHPPHTP). 2 stretches are compositionally biased toward polar residues: residues 631 to 651 (PGTS…STGE) and 927 to 948 (LTYS…SSKA). 2 stretches are compositionally biased toward basic and acidic residues: residues 1108-1127 (HKSE…RLEG) and 1137-1146 (RKTEDTHQDE).

Belongs to the SPATA31 family.

The protein localises to the membrane. May play a role in spermatogenesis. In Homo sapiens (Human), this protein is Spermatogenesis-associated protein 31A5 (SPATA31A5).